The primary structure comprises 449 residues: UDP-glycosyltransferase 74F2 (449 aa).

UDP-alpha-D-glucose-binding positions include S273, 325–327, 342–350, and 364–367; these read SPQ, HCGWNSTME, and WTDQ.

It belongs to the UDP-glycosyltransferase family. As to expression, expressed in seedlings.

Its function is as follows. Glycosyltransferase that glucosylates benzoic acid and derivatives. Substrate preference is benzoic acid &gt; salicylic acid (SA) &gt; 3-hydroxybenzoic acid &gt; 4-hydroxybenzoic acid. Catalyzes the formation of both SA 2-O-beta-D-glucoside (SAG) and SA glucose ester (SGE). Has high affinity for the tryptophan precursor anthranilate. Catalyzes the formation of anthranilate glucose ester. Is the major source of this activity in the plant. This Arabidopsis thaliana (Mouse-ear cress) protein is UDP-glycosyltransferase 74F2 (UGT74F2).